An 807-amino-acid polypeptide reads, in one-letter code: Glycerol-3-phosphate acyltransferase (807 aa).

The HXXXXD motif motif lies at 308-313 (CHRSHM).

The protein belongs to the GPAT/DAPAT family.

The protein resides in the cell inner membrane. It carries out the reaction sn-glycerol 3-phosphate + an acyl-CoA = a 1-acyl-sn-glycero-3-phosphate + CoA. It functions in the pathway phospholipid metabolism; CDP-diacylglycerol biosynthesis; CDP-diacylglycerol from sn-glycerol 3-phosphate: step 1/3. The polypeptide is Glycerol-3-phosphate acyltransferase (Shewanella halifaxensis (strain HAW-EB4)).